We begin with the raw amino-acid sequence, 307 residues long: Methionyl-tRNA formyltransferase (307 aa).

Position 108–111 (108–111 (SLLP)) interacts with (6S)-5,6,7,8-tetrahydrofolate.

Belongs to the Fmt family.

The catalysed reaction is L-methionyl-tRNA(fMet) + (6R)-10-formyltetrahydrofolate = N-formyl-L-methionyl-tRNA(fMet) + (6S)-5,6,7,8-tetrahydrofolate + H(+). In terms of biological role, attaches a formyl group to the free amino group of methionyl-tRNA(fMet). The formyl group appears to play a dual role in the initiator identity of N-formylmethionyl-tRNA by promoting its recognition by IF2 and preventing the misappropriation of this tRNA by the elongation apparatus. The polypeptide is Methionyl-tRNA formyltransferase (Stenotrophomonas maltophilia (strain R551-3)).